The following is a 136-amino-acid chain: Cell wall synthesis protein CwsA (136 aa).

The chain crosses the membrane as a helical span at residues leucine 94–valine 114.

This sequence belongs to the CwsA family. Interacts with CrgA and Wag31.

The protein resides in the cell membrane. Functionally, required for regulated cell division, cell wall synthesis and the maintenance of cell shape. This is Cell wall synthesis protein CwsA from Mycolicibacterium smegmatis (strain ATCC 700084 / mc(2)155) (Mycobacterium smegmatis).